The following is a 437-amino-acid chain: Proton/glutamate-aspartate symporter (437 aa).

Residues 1 to 5 are Cytoplasmic-facing; the sequence is MKNIK. Residues 6 to 26 traverse the membrane as a helical segment; the sequence is FSLAWQILFAMVLGILLGSYL. Over 27–50 the chain is Periplasmic; the sequence is HYHSDSRDWLVVNLLSPAGDIFIH. The chain crosses the membrane as a helical span at residues 51-71; that stretch reads LIKMIVVPIVISTLVVGIAGV. Topologically, residues 72-84 are cytoplasmic; the sequence is GDAKQLGRIGAKT. A helical transmembrane segment spans residues 85–105; it reads IIYFEVITTVAIILGITLANV. The Periplasmic portion of the chain corresponds to 106–159; sequence FQPGAGVDMSQLATVDISKYQSTTEAVQSSSHGIMGTILSLVPTNIVASMAKGE. Residues 160-180 traverse the membrane as a helical segment; that stretch reads MLPIIFFSVLFGLGLSSLPAT. Residues 181–210 lie on the Cytoplasmic side of the membrane; the sequence is HREPLVTVFRSISETMFKVTHMVMRYAPVG. The chain crosses the membrane as a helical span at residues 211–231; it reads VFALIAVTVANFGFSSLWPLA. Position 232 (lysine 232) is a topological domain, periplasmic. A helical membrane pass occupies residues 233 to 253; the sequence is LVLLVHFAILFFALVVLGIVA. The Cytoplasmic segment spans residues 254 to 292; that stretch reads RLCGLSVWILIRILKDELILAYSTASSESVLPRIIEKME. A helical transmembrane segment spans residues 293-313; the sequence is AYGAPVSITSFVVPTGYSFNL. The Periplasmic portion of the chain corresponds to 314 to 324; it reads DGSTLYQSIAA. The helical transmembrane segment at 325 to 345 threads the bilayer; sequence IFIAQLYGIDLSIWQEIILVL. Residues 346–361 are Cytoplasmic-facing; that stretch reads TLMVTSKGIAGVPGVS. Residues 362 to 382 traverse the membrane as a helical segment; the sequence is FVVLLATLGSVGIPLEGLAFI. At 383 to 387 the chain is on the periplasmic side; sequence AGVDR. Residues 388–408 form a helical membrane-spanning segment; it reads ILDMARTALNVVGNALAVLVI. At 409–437 the chain is on the cytoplasmic side; sequence AKWEHKFDRKKALAYEREVLGKFDKTADQ.

This sequence belongs to the dicarboxylate/amino acid:cation symporter (DAACS) (TC 2.A.23) family. GltP subfamily.

The protein resides in the cell inner membrane. Glutamate uptake is inhibited by L-cysteate and beta-hydroxyaspartate. Inhibited by the uncoupler carbonylcyanide m-chlorophenylhydrazone (CCCP). Catalyzes the proton-dependent, binding-protein-independent transport of glutamate and aspartate. The chain is Proton/glutamate-aspartate symporter from Escherichia coli (strain K12).